An 841-amino-acid polypeptide reads, in one-letter code: Probable alpha-glucuronidase A (841 aa).

The first 19 residues, 1–19, serve as a signal peptide directing secretion; it reads MLRLPLVLVWSLWASLTVA. Asparagine 50, asparagine 104, asparagine 223, asparagine 280, asparagine 311, asparagine 344, asparagine 466, asparagine 528, asparagine 577, asparagine 683, asparagine 724, and asparagine 733 each carry an N-linked (GlcNAc...) asparagine glycan.

The protein belongs to the glycosyl hydrolase 67 family.

The protein resides in the secreted. The catalysed reaction is an alpha-D-glucuronoside + H2O = D-glucuronate + an alcohol. Alpha-glucuronidase involved in the hydrolysis of xylan, a major structural heterogeneous polysaccharide found in plant biomass representing the second most abundant polysaccharide in the biosphere, after cellulose. Releases 4-O-methylglucuronic acid from xylan. The chain is Probable alpha-glucuronidase A (aguA) from Aspergillus terreus (strain NIH 2624 / FGSC A1156).